The primary structure comprises 90 residues: Large ribosomal subunit protein eL34 (90 aa).

Residues cysteine 36, cysteine 39, cysteine 72, and cysteine 75 each coordinate Zn(2+). The segment at 41-72 (RPLNGVPRGRPSELRKLPKTKKRPERPYPNLC) is disordered.

It belongs to the eukaryotic ribosomal protein eL34 family. Part of the 50S ribosomal subunit. The cofactor is Zn(2+).

This Thermococcus kodakarensis (strain ATCC BAA-918 / JCM 12380 / KOD1) (Pyrococcus kodakaraensis (strain KOD1)) protein is Large ribosomal subunit protein eL34.